Reading from the N-terminus, the 264-residue chain is Eukaryotic translation initiation factor 6 (264 aa).

This sequence belongs to the eIF-6 family. In terms of assembly, monomer. Associates with the 60S ribosomal subunit.

It localises to the cytoplasm. The protein localises to the nucleus. It is found in the nucleolus. In terms of biological role, binds to the 60S ribosomal subunit and prevents its association with the 40S ribosomal subunit to form the 80S initiation complex in the cytoplasm. May also be involved in ribosome biogenesis. The protein is Eukaryotic translation initiation factor 6 of Toxoplasma gondii (strain ATCC 50861 / VEG).